The following is an 885-amino-acid chain: Lon protease homolog 2, peroxisomal (885 aa).

Positions 12–256 constitute a Lon N-terminal domain; sequence LAVLPFRNKV…KATELVDRHL (245 aa). Residues 70 to 104 are disordered; that stretch reads LLSPGVGSDSGEGGSKVGGSAVESSKQDTKNGKEP. A compositionally biased stretch (gly residues) spans 77 to 86; that stretch reads SDSGEGGSKV. A compositionally biased stretch (basic and acidic residues) spans 94-104; it reads SKQDTKNGKEP. 409–416 contacts ATP; it reads GPPGVGKT. One can recognise a Lon proteolytic domain in the interval 690–875; it reads VASPGVSVGL…EEVLDHAFEG (186 aa). Residues serine 781 and lysine 824 contribute to the active site. The short motif at 883 to 885 is the Microbody targeting signal element; the sequence is SKL.

This sequence belongs to the peptidase S16 family.

The protein localises to the peroxisome matrix. It catalyses the reaction Hydrolysis of proteins in presence of ATP.. In terms of biological role, ATP-dependent serine protease that mediates the selective degradation of misfolded and unassembled polypeptides in the peroxisomal matrix. Necessary for type 2 peroxisome targeting signal (PTS2)-containing protein processing and facilitates peroxisome matrix protein import. The protein is Lon protease homolog 2, peroxisomal (LON1) of Zea mays (Maize).